The primary structure comprises 302 residues: MLMSRISYRRLDGILLLDKPAGISSNSALQVARRLLRAKKGGHTGSLDPLATGLLPLCFGEATKIAGLLLDSTKAYDADVLLGTTTTTDDAEGAVLLTRPVPTLDAEMVDALIPQLIGRIRQRAPIYSALKQGGEPLYAKARRGEVVNAPVREVEVHAIELLFLATPRLQLRVTCGSGTYIRSLVRDLGEILGCGAHINALRRRWVAPFQIPKMLTLDALEQALSAGRDPDSLLLPLVEGLAGFPALELDAQRLACFRLGQRLRDHSFQTGRVAVFSRDGIPAGLGEVDSEGLLVPQRLFNL.

Catalysis depends on Asp48, which acts as the Nucleophile.

This sequence belongs to the pseudouridine synthase TruB family. Type 1 subfamily.

The catalysed reaction is uridine(55) in tRNA = pseudouridine(55) in tRNA. Its function is as follows. Responsible for synthesis of pseudouridine from uracil-55 in the psi GC loop of transfer RNAs. This is tRNA pseudouridine synthase B from Xylella fastidiosa (strain Temecula1 / ATCC 700964).